We begin with the raw amino-acid sequence, 610 residues long: UvrABC system protein C (610 aa).

The GIY-YIG domain occupies 16 to 94; sequence SQPGVYSMYD…IKLYQPRYNV (79 aa). Residues 204 to 239 form the UVR domain; it reads QQVLNQLVERMELASRALNFEDAAHARDQIQAVRRV.

The protein belongs to the UvrC family. Interacts with UvrB in an incision complex.

It localises to the cytoplasm. In terms of biological role, the UvrABC repair system catalyzes the recognition and processing of DNA lesions. UvrC both incises the 5' and 3' sides of the lesion. The N-terminal half is responsible for the 3' incision and the C-terminal half is responsible for the 5' incision. The protein is UvrABC system protein C of Sodalis glossinidius (strain morsitans).